A 747-amino-acid chain; its full sequence is Elongation factor G, mitochondrial (747 aa).

Residues 1 to 32 (MTLITRVLNSNLPLRLSALKTVRQLQCGYSSH) constitute a mitochondrion transit peptide. One can recognise a tr-type G domain in the interval 42–319 (ERIRNIGISA…AIIDYLPNPG (278 aa)). GTP-binding positions include 51-58 (AHIDSGKT), 118-122 (DTPGH), and 172-175 (NKLD).

It belongs to the TRAFAC class translation factor GTPase superfamily. Classic translation factor GTPase family. EF-G/EF-2 subfamily.

Its subcellular location is the mitochondrion. Its pathway is protein biosynthesis; polypeptide chain elongation. In terms of biological role, mitochondrial GTPase that catalyzes the GTP-dependent ribosomal translocation step during translation elongation. During this step, the ribosome changes from the pre-translocational (PRE) to the post-translocational (POST) state as the newly formed A-site-bound peptidyl-tRNA and P-site-bound deacylated tRNA move to the P and E sites, respectively. Catalyzes the coordinated movement of the two tRNA molecules, the mRNA and conformational changes in the ribosome. Essential during development as it acts as a retrograde signal from mitochondria to the nucleus to slow down cell proliferation if mitochondrial energy output is low. The chain is Elongation factor G, mitochondrial from Drosophila virilis (Fruit fly).